The following is a 386-amino-acid chain: Alanine racemase (386 aa).

Catalysis depends on Lys48, which acts as the Proton acceptor; specific for D-alanine. Position 48 is an N6-(pyridoxal phosphate)lysine (Lys48). Arg149 provides a ligand contact to substrate. Tyr278 serves as the catalytic Proton acceptor; specific for L-alanine. Substrate is bound at residue Met326.

This sequence belongs to the alanine racemase family. Pyridoxal 5'-phosphate serves as cofactor.

It catalyses the reaction L-alanine = D-alanine. The protein operates within amino-acid biosynthesis; D-alanine biosynthesis; D-alanine from L-alanine: step 1/1. Catalyzes the interconversion of L-alanine and D-alanine. May also act on other amino acids. The sequence is that of Alanine racemase (alr) from Nostoc sp. (strain PCC 7120 / SAG 25.82 / UTEX 2576).